The chain runs to 382 residues: Pyrimidine monooxygenase RutA (382 aa).

FMN contacts are provided by residues 68-69 (IK), N134, E143, 159-160 (RY), and S209.

This sequence belongs to the NtaA/SnaA/DszA monooxygenase family. RutA subfamily.

The catalysed reaction is uracil + FMNH2 + NADH + O2 = (Z)-3-ureidoacrylate + FMN + NAD(+) + H2O + H(+). It carries out the reaction thymine + FMNH2 + NADH + O2 = (Z)-2-methylureidoacrylate + FMN + NAD(+) + H2O + H(+). Catalyzes the pyrimidine ring opening between N-3 and C-4 by an unusual flavin hydroperoxide-catalyzed mechanism, adding oxygen atoms in the process to yield ureidoacrylate peracid, that immediately reacts with FMN forming ureidoacrylate and FMN-N(5)-oxide. The FMN-N(5)-oxide reacts spontaneously with NADH to produce FMN. Requires the flavin reductase RutF to regenerate FMN in vivo. This chain is Pyrimidine monooxygenase RutA, found in Escherichia coli (strain B / BL21-DE3).